The following is a 631-amino-acid chain: Pescadillo homolog (631 aa).

In terms of domain architecture, BRCT spans 321–414 (RLRTLFKGLK…QLLPTNDYFL (94 aa)). Positions 428–442 (SKRDSYIPPEEKALH) are enriched in basic and acidic residues. 2 disordered regions span residues 428 to 471 (SKRD…EADQ) and 489 to 560 (YKKY…EVDE). 2 positions are modified to phosphoserine: serine 453 and serine 457. Composition is skewed to acidic residues over residues 453 to 471 (SEEE…EADQ) and 498 to 525 (VNED…EDVD). Residues 526-538 (EQTKRKQQEKEKM) are compositionally biased toward basic and acidic residues. Positions 544–553 (KVHKVNKRQV) are enriched in basic residues. Positions 593–629 (LRKKRRNIDADTKEAKKAAKREARKLAAEAAARAAKL) form a coiled coil.

This sequence belongs to the pescadillo family.

It is found in the nucleus. It localises to the nucleolus. Its subcellular location is the nucleoplasm. In terms of biological role, required for maturation of ribosomal RNAs and formation of the large ribosomal subunit. This Drosophila persimilis (Fruit fly) protein is Pescadillo homolog.